We begin with the raw amino-acid sequence, 141 residues long: Phage-like element PBSX protein XkdS (141 aa).

This sequence to B.subtilis YqbS.

The chain is Phage-like element PBSX protein XkdS (xkdS) from Bacillus subtilis (strain 168).